A 299-amino-acid chain; its full sequence is Phosphatidylinositol-3-phosphatase (299 aa).

Positions 1–43 are cleaved as a signal peptide; that stretch reads MLRGIQALSRPLTRVYRALAVIGVLAASLLASWVGAVPQVGLA.

As to quaternary structure, monomer. SapM interacts with host RAB7 via its C-terminus. The cofactor is a metal cation.

The protein resides in the secreted. The protein localises to the host cytoplasmic vesicle. It is found in the host phagosome. It catalyses the reaction a phosphate monoester + H2O = an alcohol + phosphate. The enzyme catalyses a 1,2-diacyl-sn-glycero-3-phospho-(1D-myo-inositol-3-phosphate) + H2O = a 1,2-diacyl-sn-glycero-3-phospho-(1D-myo-inositol) + phosphate. Its activity is regulated as follows. Phosphatase activity is inhibited in vitro by low concentrations of several heavy metals (zinc chloride, sodium molybdate, magnesium chloride, and copper sulfate) and moderately high concentrations (&gt;8 mM) of EDTA. In terms of biological role, virulence factor that plays an important role in blocking phagosome-lysosome fusion and thus participates in the intracellular survival of the pathogen. Acts as a phosphatase that dephosphorylates phosphatidylinositol 3-phosphate (PI3P), a membrane trafficking regulatory lipid essential for phagosomal acquisition of lysosomal constituents. Therefore, SapM eliminates PI3P from the phagosomal membrane by catalyzing its hydrolysis, and thus contributes to inhibition of phagosome maturation. Also interferes with autophagy: SapM blocks autophagosome-lysosome fusion in macrophages by binding to the small GTPase RAB7, which prevents RAB7 from being involved in this process and thus negatively regulates autophagy flux. In vitro, displays phosphatase activity with broad specificity; can dephosphorylate a variety of phosphoester substrates, with the highest activity against phosphoenolpyruvate, glycerophosphate, GTP, NADPH, phosphotyrosine and trehalose-6-phosphate. In contrast, the enzyme exhibits poor activity against glucose-6-phosphate, phosphothreonine, and a number of nucleotides (NADP, ATP, AMP, and GMP). This Mycobacterium tuberculosis (strain ATCC 25618 / H37Rv) protein is Phosphatidylinositol-3-phosphatase.